The chain runs to 325 residues: NADH-quinone oxidoreductase subunit H (325 aa).

A run of 8 helical transmembrane segments spans residues 11 to 31, 81 to 101, 114 to 134, 154 to 174, 186 to 206, 237 to 257, 265 to 285, and 304 to 324; these read ILIS…CGAF, AIFT…FAIV, IGIL…LFAG, LSYE…VGSF, VWNV…GVAV, FFVG…TLFF, LPPF…FILI, and VCLP…LYNA.

It belongs to the complex I subunit 1 family. NDH-1 is composed of 13 different subunits. Subunits NuoA, H, J, K, L, M, N constitute the membrane sector of the complex.

The protein localises to the cell inner membrane. It catalyses the reaction a quinone + NADH + 5 H(+)(in) = a quinol + NAD(+) + 4 H(+)(out). NDH-1 shuttles electrons from NADH, via FMN and iron-sulfur (Fe-S) centers, to quinones in the respiratory chain. The immediate electron acceptor for the enzyme in this species is believed to be ubiquinone. Couples the redox reaction to proton translocation (for every two electrons transferred, four hydrogen ions are translocated across the cytoplasmic membrane), and thus conserves the redox energy in a proton gradient. This subunit may bind ubiquinone. The chain is NADH-quinone oxidoreductase subunit H from Yersinia pseudotuberculosis serotype O:3 (strain YPIII).